A 258-amino-acid polypeptide reads, in one-letter code: Indole-3-glycerol phosphate synthase 2 (258 aa).

It belongs to the TrpC family.

The catalysed reaction is 1-(2-carboxyphenylamino)-1-deoxy-D-ribulose 5-phosphate + H(+) = (1S,2R)-1-C-(indol-3-yl)glycerol 3-phosphate + CO2 + H2O. Its pathway is amino-acid biosynthesis; L-tryptophan biosynthesis; L-tryptophan from chorismate: step 4/5. The function of the second trp operon in S.coelicolor is to produce tryptophan for the biosynthesis of calcium-dependent antibiotic (CDA). The polypeptide is Indole-3-glycerol phosphate synthase 2 (trpC2) (Streptomyces coelicolor (strain ATCC BAA-471 / A3(2) / M145)).